Reading from the N-terminus, the 88-residue chain is Protein GOLVEN 10 (88 aa).

The signal sequence occupies residues 1 to 22 (MSSIHVASMILLLFLFLHHSDS). A propeptide spanning residues 23 to 75 (RHLDNVHITASRFSLVKDQNVVSSSTSKEPVKVSRFVPGPLKHHHRRPPLLFA) is cleaved from the precursor. A disordered region spans residues 44 to 88 (VSSSTSKEPVKVSRFVPGPLKHHHRRPPLLFADYPKPSTRPPRHN). Tyr-77 is subject to Sulfotyrosine. At Pro-85 the chain carries Hydroxyproline.

The protein belongs to the RGF family. As to quaternary structure, binds to LRR receptor-like serine/threonine-protein kinases RGI1, RGI2 and RGI3 to trigger their dimerization with SERK proteins and subsequent signaling. In terms of tissue distribution, expressed in roots, shoots, leaves and flowers.

The protein localises to the secreted. Its subcellular location is the endoplasmic reticulum. Its function is as follows. Signaling peptide (root growth factor) that maintains the postembryonic root stem cell niche. Regulates the pattern of root growth and lateral root development by modulating the length and the number of cortical cells in the root apical meristem (RAM), and the anticlinal asymmetric cell divisions in lateral root initiation cells. This chain is Protein GOLVEN 10, found in Arabidopsis thaliana (Mouse-ear cress).